Here is a 403-residue protein sequence, read N- to C-terminus: 5,7-dihydroxy-2-methylchromone synthase (403 aa).

Residue H68 participates in CoA binding. C174 is a catalytic residue. Position 174 is a cysteine sulfinic acid (-SO2H) (C174). Residues L277, S281, and 318 to 321 (GGRA) each bind CoA.

The protein belongs to the thiolase-like superfamily. Chalcone/stilbene synthases family. As to quaternary structure, homodimer.

It carries out the reaction 5 malonyl-CoA + 4 H(+) = 5,7-dihydroxy-2-methyl-4H-chromen-4-one + 5 CO2 + 5 CoA + H2O. Its pathway is secondary metabolite biosynthesis; flavonoid biosynthesis. In terms of biological role, catalyzes the iterative condensations of 5 molecules of malonyl-CoA to produce a pentaketide 5,7-dihydroxy-2-methylchromone. The chain is 5,7-dihydroxy-2-methylchromone synthase from Aloe arborescens (Kidachi aloe).